A 348-amino-acid polypeptide reads, in one-letter code: Nicotinate-nucleotide--dimethylbenzimidazole phosphoribosyltransferase (348 aa).

The active-site Proton acceptor is the glutamate 316.

It belongs to the CobT family.

It carries out the reaction 5,6-dimethylbenzimidazole + nicotinate beta-D-ribonucleotide = alpha-ribazole 5'-phosphate + nicotinate + H(+). Its pathway is nucleoside biosynthesis; alpha-ribazole biosynthesis; alpha-ribazole from 5,6-dimethylbenzimidazole: step 1/2. In terms of biological role, catalyzes the synthesis of alpha-ribazole-5'-phosphate from nicotinate mononucleotide (NAMN) and 5,6-dimethylbenzimidazole (DMB). The protein is Nicotinate-nucleotide--dimethylbenzimidazole phosphoribosyltransferase of Xanthomonas campestris pv. campestris (strain B100).